The sequence spans 457 residues: tRNA-2-methylthio-N(6)-dimethylallyladenosine synthase (457 aa).

The MTTase N-terminal domain occupies 3-120 (KKVYVKTFGC…LPQMIDARRA (118 aa)). 6 residues coordinate [4Fe-4S] cluster: Cys-12, Cys-49, Cys-83, Cys-157, Cys-161, and Cys-164. The region spanning 143-377 (RVEGPSAFVS…QATIEENVAR (235 aa)) is the Radical SAM core domain. The TRAM domain occupies 380-447 (QSMVGKVERI…PHSLRGELLL (68 aa)).

It belongs to the methylthiotransferase family. MiaB subfamily. In terms of assembly, monomer. The cofactor is [4Fe-4S] cluster.

It localises to the cytoplasm. The enzyme catalyses N(6)-dimethylallyladenosine(37) in tRNA + (sulfur carrier)-SH + AH2 + 2 S-adenosyl-L-methionine = 2-methylsulfanyl-N(6)-dimethylallyladenosine(37) in tRNA + (sulfur carrier)-H + 5'-deoxyadenosine + L-methionine + A + S-adenosyl-L-homocysteine + 2 H(+). In terms of biological role, catalyzes the methylthiolation of N6-(dimethylallyl)adenosine (i(6)A), leading to the formation of 2-methylthio-N6-(dimethylallyl)adenosine (ms(2)i(6)A) at position 37 in tRNAs that read codons beginning with uridine. The protein is tRNA-2-methylthio-N(6)-dimethylallyladenosine synthase of Burkholderia vietnamiensis (strain G4 / LMG 22486) (Burkholderia cepacia (strain R1808)).